Here is a 101-residue protein sequence, read N- to C-terminus: Large ribosomal subunit protein eL30 (101 aa).

This sequence belongs to the eukaryotic ribosomal protein eL30 family.

This chain is Large ribosomal subunit protein eL30, found in Pyrobaculum neutrophilum (strain DSM 2338 / JCM 9278 / NBRC 100436 / V24Sta) (Thermoproteus neutrophilus).